The chain runs to 1651 residues: Roundabout homolog 1 (1651 aa).

The N-terminal stretch at M1–A25 is a signal peptide. At Q26–P897 the chain is on the extracellular side. Residues D33–T57 are disordered. The segment covering I44–Y56 has biased composition (polar residues). Ig-like C2-type domains lie at P68–E164, D170–T257, P262–T346, P351–T446, and P455–E541. A disulfide bond links C89 and C147. N160 carries N-linked (GlcNAc...) asparagine glycosylation. 3 disulfide bridges follow: C191–C240, C283–C330, and C372–C428. N463 is a glycosylation site (N-linked (GlcNAc...) asparagine). Residues C476 and C525 are joined by a disulfide bond. Fibronectin type-III domains lie at A563–V657, A676–E773, and P778–H874. Residues N790, N820, and N827 are each glycosylated (N-linked (GlcNAc...) asparagine). A helical transmembrane segment spans residues A898–L918. At Y919 to S1651 the chain is on the cytoplasmic side. S940 carries the phosphoserine modification. A Phosphothreonine modification is found at T948. Y1038 carries the phosphotyrosine; by ABL; in vitro modification. Position 1055 is a phosphoserine (S1055). Y1073 and Y1114 each carry phosphotyrosine; by ABL; in vitro. 4 disordered regions span residues K1124–Y1202, Y1224–E1337, E1352–F1397, and R1420–S1651. Positions P1137–T1146 are enriched in polar residues. Positions G1147–Q1163 are enriched in low complexity. Over residues L1186–H1196 the composition is skewed to pro residues. T1240 carries the phosphothreonine modification. Positions Y1255–E1269 are enriched in polar residues. The segment covering E1281–R1293 has biased composition (basic and acidic residues). Residues V1296–P1307 show a composition bias toward pro residues. The residue at position 1297 (S1297) is a Phosphoserine. Acidic residues predominate over residues M1322–M1336. Residues S1384–F1397 show a composition bias toward low complexity. Positions P1438–S1451 are enriched in polar residues. Basic residues predominate over residues R1459–H1470. A compositionally biased stretch (pro residues) spans L1480 to I1490. 2 stretches are compositionally biased toward basic and acidic residues: residues A1516–V1541 and D1549–P1573. Residues F1592–P1601 are compositionally biased toward polar residues. Low complexity predominate over residues S1602 to S1614. Positions N1642–S1651 are enriched in acidic residues.

The protein belongs to the immunoglobulin superfamily. ROBO family. As to quaternary structure, homodimer. Dimerization is mediated by the extracellular domain and is independent of SLIT liganding. Interacts with SLIT1. Interacts with SLIT2. Interacts with FLRT3. Interacts with MYO9B (via Rho-GAP domain). Ubiquitinated. May be deubiquitinated by USP33. In terms of tissue distribution, widely expressed, with exception of kidney.

It is found in the cell membrane. The protein localises to the cell projection. Its subcellular location is the axon. It localises to the endoplasmic reticulum-Golgi intermediate compartment membrane. Its function is as follows. Receptor for SLIT1 and SLIT2 that mediates cellular responses to molecular guidance cues in cellular migration, including axonal navigation at the ventral midline of the neural tube and projection of axons to different regions during neuronal development. Interaction with the intracellular domain of FLRT3 mediates axon attraction towards cells expressing NTN1. In axon growth cones, the silencing of the attractive effect of NTN1 by SLIT2 may require the formation of a ROBO1-DCC complex. Plays a role in the regulation of cell migration via its interaction with MYO9B; inhibits MYO9B-mediated stimulation of RHOA GTPase activity, and thereby leads to increased levels of active, GTP-bound RHOA. May be required for lung development. The chain is Roundabout homolog 1 (ROBO1) from Homo sapiens (Human).